A 171-amino-acid chain; its full sequence is MSILQILHFPDDRLRKIASPVKKMDDQIRQIADDMLETMYQAEGIGLAATQVNIHQRIIVIDVSEDRHQPLILINPELLEKSGETGIEEGCLSIPGEKAFIPRAKEITIQALNREGRSFRLSADDLLAICIQHEMDHLIGKLFVDYLSPFKRQRIQKKMEKLQKINEKKDK.

Residues C91 and H133 each contribute to the Fe cation site. E134 is a catalytic residue. H137 contacts Fe cation.

The protein belongs to the polypeptide deformylase family. Fe(2+) serves as cofactor.

The enzyme catalyses N-terminal N-formyl-L-methionyl-[peptide] + H2O = N-terminal L-methionyl-[peptide] + formate. Its function is as follows. Removes the formyl group from the N-terminal Met of newly synthesized proteins. Requires at least a dipeptide for an efficient rate of reaction. N-terminal L-methionine is a prerequisite for activity but the enzyme has broad specificity at other positions. The sequence is that of Peptide deformylase from Hamiltonella defensa subsp. Acyrthosiphon pisum (strain 5AT).